The following is a 141-amino-acid chain: Nucleoside diphosphate kinase (141 aa).

Residues K11, F59, R87, T93, R104, and N114 each contribute to the ATP site. H117 functions as the Pros-phosphohistidine intermediate in the catalytic mechanism.

This sequence belongs to the NDK family. Homotetramer. Requires Mg(2+) as cofactor.

It is found in the cytoplasm. The catalysed reaction is a 2'-deoxyribonucleoside 5'-diphosphate + ATP = a 2'-deoxyribonucleoside 5'-triphosphate + ADP. The enzyme catalyses a ribonucleoside 5'-diphosphate + ATP = a ribonucleoside 5'-triphosphate + ADP. Its function is as follows. Major role in the synthesis of nucleoside triphosphates other than ATP. The ATP gamma phosphate is transferred to the NDP beta phosphate via a ping-pong mechanism, using a phosphorylated active-site intermediate. This Polynucleobacter asymbioticus (strain DSM 18221 / CIP 109841 / QLW-P1DMWA-1) (Polynucleobacter necessarius subsp. asymbioticus) protein is Nucleoside diphosphate kinase.